The primary structure comprises 106 residues: MQDLESLYQMVAARKANPKEGSYTDYLFTKGLDKILKKVGEETTEVIVAAKNEGTAELQYETADLLYHLMVLLVEQGLTYDDIKEELGKREGLMSDFKDRPEIKDL.

Belongs to the PRA-PH family.

The protein localises to the cytoplasm. It catalyses the reaction 1-(5-phospho-beta-D-ribosyl)-ATP + H2O = 1-(5-phospho-beta-D-ribosyl)-5'-AMP + diphosphate + H(+). It participates in amino-acid biosynthesis; L-histidine biosynthesis; L-histidine from 5-phospho-alpha-D-ribose 1-diphosphate: step 2/9. The polypeptide is Phosphoribosyl-ATP pyrophosphatase (Limosilactobacillus fermentum (strain NBRC 3956 / LMG 18251) (Lactobacillus fermentum)).